The primary structure comprises 25 residues: Xenoposin precursor fragment BM2 (25 aa).

Expressed by the skin glands.

Its subcellular location is the secreted. In terms of biological role, antimicrobial peptide. The chain is Xenoposin precursor fragment BM2 from Xenopus boumbaensis (Mawa clawed frog).